We begin with the raw amino-acid sequence, 262 residues long: Abhydrolase domain-containing protein ACTT2-1 (262 aa).

The Peroxisomal targeting signal type 1 motif lies at 260 to 262 (SKL).

The protein belongs to the AB hydrolase superfamily. AKT2 hydrolase family.

It localises to the peroxisome. The protein operates within mycotoxin biosynthesis. Functionally, abhydrolase domain-containing protein; part of the gene clusters that mediate the biosynthesis of the host-selective toxins (HSTs) ACT-toxins responsible for brown spot of tangerine disease by the tangerine pathotype which affects tangerines and mandarins. ACT-toxins consist of three moieties, 9,10-epoxy-8-hydroxy-9-methyl-decatrienoic acid (EDA), valine and a polyketide. ACT-toxin I is toxic to both citrus and pear; toxin II the 5''-deoxy derivative of ACT-toxin I, is highly toxic to pear and slightly toxic to citrus. On cellular level, ACT-toxins affect plasma membrane of susceptible cells and cause a sudden increase in loss of K(+) after a few minutes of toxin treatment. The acyl-CoA ligase ACTT1, the hydrolase ACTT2, the enoyl-CoA hydratases ACTT3 and ACTT6, and the acyl-CoA synthetase ACTT5 are all involved in the biosynthesis of the AK-, AF- and ACT-toxin common 9,10-epoxy-8-hydroxy-9-methyl-decatrienoic acid (EDA) structural moiety. The exact role of each enzyme, and of additional enzymes identified within the AF-toxin clusters have still to be determined. On the other hand, ACTTS1 to ACTTS4 are specific to the tangerine pathotype. The function of ACTTS3 is to elongate the polyketide chain portion of ACT-toxin that is unique to this toxin. The enoyl-reductase ACTTS2 might complement the missing enoyl-reductase (ER) domain in ACTTS3 in the synthesis of the polyketide portion of ACT-toxin. The roles of the nonribosomal peptide synthetases-related proteins ACTTS1 and ACTTS4 have also still not been elucidated. This chain is Abhydrolase domain-containing protein ACTT2-1, found in Alternaria alternata (Alternaria rot fungus).